A 169-amino-acid chain; its full sequence is Cell division inhibitor SulA (169 aa).

Positions 1–16 are enriched in polar residues; it reads MFTSAHANRSPLTSAS. The tract at residues 1–20 is disordered; that stretch reads MFTSAHANRSPLTSASVRRP. The ftsZ binding stretch occupies residues 106-112; sequence ALRTGNY. A lon protease binding region spans residues 162-169; the sequence is KIHSNLYH.

The protein belongs to the SulA family. In terms of assembly, interacts with FtsZ. Is rapidly cleaved and degraded by the Lon protease once DNA damage is repaired.

Its function is as follows. Component of the SOS system and an inhibitor of cell division. Accumulation of SulA causes rapid cessation of cell division and the appearance of long, non-septate filaments. In the presence of GTP, binds a polymerization-competent form of FtsZ in a 1:1 ratio, thus inhibiting FtsZ polymerization and therefore preventing it from participating in the assembly of the Z ring. This mechanism prevents the premature segregation of damaged DNA to daughter cells during cell division. The chain is Cell division inhibitor SulA from Klebsiella aerogenes (Enterobacter aerogenes).